The chain runs to 118 residues: Putative pterin-4-alpha-carbinolamine dehydratase (118 aa).

This sequence belongs to the pterin-4-alpha-carbinolamine dehydratase family.

The enzyme catalyses (4aS,6R)-4a-hydroxy-L-erythro-5,6,7,8-tetrahydrobiopterin = (6R)-L-erythro-6,7-dihydrobiopterin + H2O. The polypeptide is Putative pterin-4-alpha-carbinolamine dehydratase (phhB) (Xanthomonas axonopodis pv. citri (strain 306)).